Here is a 208-residue protein sequence, read N- to C-terminus: MDAIVKNFPGAGAKPDVAEARPSQAEAEEAVRVLLRWAGENPAREGLLDTPKRVAKAYRELFAGYELNVQDVLGTTFEEVGGYDDVVLVRDIPFFSHCEHHMVPIVGKAHVAYLPAGRVLGLSKIARVVEIFGRRLQTQENMTAQIARSIEETLKPRGVAVMIDAEHMCMSMRGVNKQGSTTLTTSFTGTFKNDPAEQVRFMTMVRNR.

Cys98, His101, and Cys169 together coordinate Zn(2+).

It belongs to the GTP cyclohydrolase I family. Toroid-shaped homodecamer, composed of two pentamers of five dimers.

The catalysed reaction is GTP + H2O = 7,8-dihydroneopterin 3'-triphosphate + formate + H(+). Its pathway is cofactor biosynthesis; 7,8-dihydroneopterin triphosphate biosynthesis; 7,8-dihydroneopterin triphosphate from GTP: step 1/1. This chain is GTP cyclohydrolase 1, found in Agrobacterium fabrum (strain C58 / ATCC 33970) (Agrobacterium tumefaciens (strain C58)).